We begin with the raw amino-acid sequence, 598 residues long: Vacuolin-A (598 aa).

Residues 482-539 (IKTTEARLKAETDNIALEQRNKAIISESQAKLSSAQREAESLLITAEAQKKASELQGE) adopt a coiled-coil conformation.

The protein belongs to the vacuolin family.

The protein localises to the endosome membrane. It is found in the lysosome. The protein is Vacuolin-A (vacA) of Dictyostelium discoideum (Social amoeba).